The following is a 1035-amino-acid chain: GRB10-interacting GYF protein 1 (1035 aa).

Residues serine 24, serine 28, serine 137, and serine 157 each carry the phosphoserine modification. A disordered region spans residues 105–422 (KGAGPPLAGT…AGPPGDLEDD (318 aa)). 2 stretches are compositionally biased toward basic and acidic residues: residues 148–179 (SPRE…RCGF) and 186–203 (PRKE…SLRE). Serine 230 bears the Phosphoserine mark. The span at 239 to 267 (GWREHGERRRKFEFDLRGDRGGCGEEEGR) shows a compositional bias: basic and acidic residues. 2 stretches are compositionally biased toward acidic residues: residues 295–304 (CLDDEDEEMG) and 324–349 (PEEQ…EEGP). Phosphoserine is present on serine 341. Residues 367 to 378 (SSPSPLPTLGPL) are compositionally biased toward low complexity. Residues 388–401 (TAEKEPPAAEDDIR) show a composition bias toward basic and acidic residues. Serine 406 is modified (phosphoserine). A compositionally biased stretch (low complexity) spans 406–417 (SPGVGSSAGPPG). The 49-residue stretch at 474-522 (ARKWFYKDPQGEIQGPFTTQEMAEWFQAGYFSMSLLVKRGCDEGFQPLG) folds into the GYF domain. Residues serine 538 and serine 638 each carry the phosphoserine modification. Disordered regions lie at residues 621–640 (PPRG…LSVP), 696–724 (KREE…QEEE), and 825–879 (WGGP…RPIR). Polar residues predominate over residues 629 to 639 (LLPTMSRSLSV). Basic and acidic residues predominate over residues 696–722 (KREEEERKRREEKRRQQQQEEQKRRQE). Residues 857 to 874 (LKNSRSSPSLSDSYSHLS) show a composition bias toward low complexity. Serine 862 is subject to Phosphoserine.

It belongs to the GIGYF family. As to quaternary structure, interacts with GRB10. This transient binding is increased under IGF1 stimulation and leads to recruitment of GIGYF1/GRB10 complex to IGF1 receptor. Interacts with DDX6.

Its function is as follows. May act cooperatively with GRB10 to regulate tyrosine kinase receptor signaling. May increase IGF1 receptor phosphorylation under IGF1 stimulation as well as phosphorylation of IRS1 and SHC1. The polypeptide is GRB10-interacting GYF protein 1 (GIGYF1) (Homo sapiens (Human)).